The chain runs to 144 residues: Large ribosomal subunit protein uL15 (144 aa).

The tract at residues 1-57 (MRFNELQPAKGSRFAGKRLGRGIGSGLGKTSGKGHKGQKARSGGYHKVGFEGGQMPL) is disordered. A compositionally biased stretch (gly residues) spans 21-31 (RGIGSGLGKTS).

Belongs to the universal ribosomal protein uL15 family. In terms of assembly, part of the 50S ribosomal subunit.

Functionally, binds to the 23S rRNA. The protein is Large ribosomal subunit protein uL15 of Dichelobacter nodosus (strain VCS1703A).